The chain runs to 249 residues: 5'-nucleotidase SurE (249 aa).

The a divalent metal cation site is built by aspartate 9, aspartate 10, serine 40, and asparagine 92.

The protein belongs to the SurE nucleotidase family. A divalent metal cation is required as a cofactor.

Its subcellular location is the cytoplasm. The catalysed reaction is a ribonucleoside 5'-phosphate + H2O = a ribonucleoside + phosphate. Its function is as follows. Nucleotidase that shows phosphatase activity on nucleoside 5'-monophosphates. The sequence is that of 5'-nucleotidase SurE from Shewanella sediminis (strain HAW-EB3).